The sequence spans 434 residues: MPTFVDQTKIEVQAGKGGDGMVAFRHEKYVPNGGPAGGDGGRGGSIIFVADSGLRTLMDFRYRRKFKADSGENGRIKSQYGRAAKDLYLKVPVGTTVYDFNTGELIGDLVEKGQELVVAKGGRGGRGNIHFATSVNTAPEIAENGEPGEDRVLRLELKLLADVGLVGFPSVGKSTLLSVTTKAKPKIAAYEFTTLTPNLGMVILPDGRDFSMADLPGLIEGASQGVGLGIQFLRHVERTKVILHLVSMDPNNGREAIEDYHTIKNELKNYETDLSKKRELIVASQMDISGAEEKLAAFKKALKEEGNNEPVYEISSVTHKGVSKLMNDTATLVEEVEKERAEEEPKVVQKTKEYKYKAPQKNEFTVEKVGEHEFVVKGEQLERLVQMTNLDHQDGIMRLARRLKRLGVDDALREKGAVNGDDVAIGKFVFEFVQ.

The Obg domain maps to 2 to 160; that stretch reads PTFVDQTKIE…RVLRLELKLL (159 aa). The region spanning 161-334 is the OBG-type G domain; that stretch reads ADVGLVGFPS…LMNDTATLVE (174 aa). GTP is bound by residues 167–174, 192–196, 214–217, 284–287, and 315–317; these read GFPSVGKS, FTTLT, DLPG, SQMD, and SSV. Residues serine 174 and threonine 194 each contribute to the Mg(2+) site. An OCT domain is found at 356-434; sequence YKAPQKNEFT…IGKFVFEFVQ (79 aa).

The protein belongs to the TRAFAC class OBG-HflX-like GTPase superfamily. OBG GTPase family. In terms of assembly, monomer. It depends on Mg(2+) as a cofactor.

The protein localises to the cytoplasm. Functionally, an essential GTPase which binds GTP, GDP and possibly (p)ppGpp with moderate affinity, with high nucleotide exchange rates and a fairly low GTP hydrolysis rate. Plays a role in control of the cell cycle, stress response, ribosome biogenesis and in those bacteria that undergo differentiation, in morphogenesis control. This chain is GTPase Obg, found in Lactobacillus helveticus (strain DPC 4571).